The following is a 412-amino-acid chain: Alanyl-tRNA editing protein Aarsd1 (412 aa).

Residues histidine 108, histidine 112, cysteine 208, and histidine 212 each contribute to the Zn(2+) site.

It belongs to the class-II aminoacyl-tRNA synthetase family. Alax-L subfamily. Requires Zn(2+) as cofactor.

It localises to the cytoplasm. In terms of biological role, functions in trans to edit the amino acid moiety from incorrectly charged tRNA(Ala). The chain is Alanyl-tRNA editing protein Aarsd1 (aarsd1) from Danio rerio (Zebrafish).